Here is a 124-residue protein sequence, read N- to C-terminus: Small ribosomal subunit protein uS12 (124 aa).

3-methylthioaspartic acid is present on aspartate 89.

It belongs to the universal ribosomal protein uS12 family. Part of the 30S ribosomal subunit. Contacts proteins S8 and S17. May interact with IF1 in the 30S initiation complex.

In terms of biological role, with S4 and S5 plays an important role in translational accuracy. Interacts with and stabilizes bases of the 16S rRNA that are involved in tRNA selection in the A site and with the mRNA backbone. Located at the interface of the 30S and 50S subunits, it traverses the body of the 30S subunit contacting proteins on the other side and probably holding the rRNA structure together. The combined cluster of proteins S8, S12 and S17 appears to hold together the shoulder and platform of the 30S subunit. The sequence is that of Small ribosomal subunit protein uS12 from Koribacter versatilis (strain Ellin345).